A 207-amino-acid polypeptide reads, in one-letter code: Guanylate kinase (207 aa).

Residues 7 to 185 enclose the Guanylate kinase-like domain; that stretch reads GIVLVLCAPS…AYDELRAAYI (179 aa). 14–21 is an ATP binding site; that stretch reads APSGTGKT.

The protein belongs to the guanylate kinase family.

Its subcellular location is the cytoplasm. The enzyme catalyses GMP + ATP = GDP + ADP. Its function is as follows. Essential for recycling GMP and indirectly, cGMP. The protein is Guanylate kinase of Nitratidesulfovibrio vulgaris (strain ATCC 29579 / DSM 644 / CCUG 34227 / NCIMB 8303 / VKM B-1760 / Hildenborough) (Desulfovibrio vulgaris).